The chain runs to 369 residues: Glutamate 5-kinase (369 aa).

An ATP-binding site is contributed by lysine 14. Positions 56, 143, and 155 each coordinate substrate. Residues serine 175–aspartate 176 and threonine 215–lysine 221 contribute to the ATP site. Positions alanine 277–glycine 351 constitute a PUA domain.

It belongs to the glutamate 5-kinase family.

Its subcellular location is the cytoplasm. The enzyme catalyses L-glutamate + ATP = L-glutamyl 5-phosphate + ADP. It functions in the pathway amino-acid biosynthesis; L-proline biosynthesis; L-glutamate 5-semialdehyde from L-glutamate: step 1/2. In terms of biological role, catalyzes the transfer of a phosphate group to glutamate to form L-glutamate 5-phosphate. The protein is Glutamate 5-kinase of Corynebacterium glutamicum (strain ATCC 13032 / DSM 20300 / JCM 1318 / BCRC 11384 / CCUG 27702 / LMG 3730 / NBRC 12168 / NCIMB 10025 / NRRL B-2784 / 534).